Reading from the N-terminus, the 241-residue chain is Uridylate kinase (241 aa).

14–17 (KLSG) serves as a coordination point for ATP. Positions 22-27 (GGLGMG) are involved in allosteric activation by GTP. Gly-56 contributes to the UMP binding site. Residues Gly-57 and Arg-61 each contribute to the ATP site. UMP contacts are provided by residues Asp-77 and 138–145 (TGNPFFTT). The ATP site is built by Thr-165, Tyr-171, and Asp-174.

Belongs to the UMP kinase family. As to quaternary structure, homohexamer.

The protein resides in the cytoplasm. The enzyme catalyses UMP + ATP = UDP + ADP. The protein operates within pyrimidine metabolism; CTP biosynthesis via de novo pathway; UDP from UMP (UMPK route): step 1/1. Allosterically activated by GTP. Inhibited by UTP. Functionally, catalyzes the reversible phosphorylation of UMP to UDP. The protein is Uridylate kinase of Psychrobacter sp. (strain PRwf-1).